A 455-amino-acid polypeptide reads, in one-letter code: UDP-glycosyltransferase 2 (455 aa).

This sequence belongs to the UDP-glycosyltransferase family.

It catalyses the reaction exophillate + UDP-alpha-D-galactose = phaeomoniecin D + UDP + H(+). It participates in secondary metabolite biosynthesis. Catalyzes the second glycosylation step during phaeomoniecin D biosynthesis, the further O-galactosylation of exophillic acid (produced by the O-glycosyltransferase OGT1) to yield the 4-O-beta-D-galactoside phaeomoniecin D. The chain is UDP-glycosyltransferase 2 from Phaeomoniella chlamydospora (Phaeoacremonium chlamydosporum).